The chain runs to 181 residues: Probable pyruvoyl-dependent arginine decarboxylase (181 aa).

Ser43 carries the pyruvic acid (Ser) modification.

Belongs to the PdaD family. It depends on pyruvate as a cofactor.

It catalyses the reaction L-arginine + H(+) = agmatine + CO2. The sequence is that of Probable pyruvoyl-dependent arginine decarboxylase from Chlorobium phaeobacteroides (strain BS1).